The primary structure comprises 417 residues: Serine hydroxymethyltransferase (417 aa).

(6S)-5,6,7,8-tetrahydrofolate is bound by residues Leu-121 and 125–127; that span reads GHL. Position 229 is an N6-(pyridoxal phosphate)lysine (Lys-229). (6S)-5,6,7,8-tetrahydrofolate is bound at residue 355–357; it reads SPF.

It belongs to the SHMT family. Homodimer. It depends on pyridoxal 5'-phosphate as a cofactor.

It localises to the cytoplasm. The catalysed reaction is (6R)-5,10-methylene-5,6,7,8-tetrahydrofolate + glycine + H2O = (6S)-5,6,7,8-tetrahydrofolate + L-serine. The protein operates within one-carbon metabolism; tetrahydrofolate interconversion. It functions in the pathway amino-acid biosynthesis; glycine biosynthesis; glycine from L-serine: step 1/1. In terms of biological role, catalyzes the reversible interconversion of serine and glycine with tetrahydrofolate (THF) serving as the one-carbon carrier. This reaction serves as the major source of one-carbon groups required for the biosynthesis of purines, thymidylate, methionine, and other important biomolecules. Also exhibits THF-independent aldolase activity toward beta-hydroxyamino acids, producing glycine and aldehydes, via a retro-aldol mechanism. The sequence is that of Serine hydroxymethyltransferase from Yersinia enterocolitica serotype O:8 / biotype 1B (strain NCTC 13174 / 8081).